Reading from the N-terminus, the 592-residue chain is Putative RING finger protein ORF9 (592 aa).

The RING-type zinc-finger motif lies at 12 to 49; that stretch reads CCICLEEDIERVDTIPCQHTVCRPCYLKPMINKCPVCR. Residues 414 to 441 are a coiled coil; it reads WELIKREELLQRRYKREEQNLKYTSNRL.

In Ostreid herpesvirus 1 (isolate France) (OsHV-1), this protein is Putative RING finger protein ORF9.